A 138-amino-acid polypeptide reads, in one-letter code: ATP synthase epsilon chain (138 aa).

Belongs to the ATPase epsilon chain family. In terms of assembly, F-type ATPases have 2 components, CF(1) - the catalytic core - and CF(0) - the membrane proton channel. CF(1) has five subunits: alpha(3), beta(3), gamma(1), delta(1), epsilon(1). CF(0) has three main subunits: a, b and c.

The protein localises to the cell membrane. Its function is as follows. Produces ATP from ADP in the presence of a proton gradient across the membrane. This chain is ATP synthase epsilon chain, found in Polynucleobacter asymbioticus (strain DSM 18221 / CIP 109841 / QLW-P1DMWA-1) (Polynucleobacter necessarius subsp. asymbioticus).